We begin with the raw amino-acid sequence, 856 residues long: DNA gyrase subunit A (856 aa).

In terms of domain architecture, Topo IIA-type catalytic spans 45–517 (LPDARDGLKP…DDGTVTHEDL (473 aa)). Y133 functions as the O-(5'-phospho-DNA)-tyrosine intermediate in the catalytic mechanism. Residues 544–550 (QHRGGKG) carry the GyrA-box motif. The segment at 822–856 (TVASVDTHPRTDDSSEADSGDGESESENATATTPS) is disordered. Residues 835–847 (SSEADSGDGESES) show a composition bias toward acidic residues.

Belongs to the type II topoisomerase GyrA/ParC subunit family. Heterotetramer, composed of two GyrA and two GyrB chains. In the heterotetramer, GyrA contains the active site tyrosine that forms a transient covalent intermediate with DNA, while GyrB binds cofactors and catalyzes ATP hydrolysis.

The protein localises to the cytoplasm. It catalyses the reaction ATP-dependent breakage, passage and rejoining of double-stranded DNA.. A type II topoisomerase that negatively supercoils closed circular double-stranded (ds) DNA in an ATP-dependent manner to modulate DNA topology and maintain chromosomes in an underwound state. Negative supercoiling favors strand separation, and DNA replication, transcription, recombination and repair, all of which involve strand separation. Also able to catalyze the interconversion of other topological isomers of dsDNA rings, including catenanes and knotted rings. Type II topoisomerases break and join 2 DNA strands simultaneously in an ATP-dependent manner. In Haloquadratum walsbyi (strain DSM 16790 / HBSQ001), this protein is DNA gyrase subunit A.